The chain runs to 71 residues: Keratin-associated protein 6-1 (71 aa).

It belongs to the KRTAP type 6 family. In terms of assembly, interacts with hair keratins.

Its function is as follows. In the hair cortex, hair keratin intermediate filaments are embedded in an interfilamentous matrix, consisting of hair keratin-associated proteins (KRTAP), which are essential for the formation of a rigid and resistant hair shaft through their extensive disulfide bond cross-linking with abundant cysteine residues of hair keratins. The matrix proteins include the high-sulfur and high-glycine-tyrosine keratins. This chain is Keratin-associated protein 6-1 (KRTAP6-1), found in Homo sapiens (Human).